Consider the following 282-residue polypeptide: MSASLDLWNIPLRALNINVRKRLGLFLNPRNTVASDWMSVAENMGFSYLEIKNYEDCQDPTRKIYRTGKPLSRAQVGKLVSILDNVTRKDVVEDLRVLIEEDCKRYIERQNEPPVQVPEVDSCVPRTPERQGITLEDDPEGGIPELFDAFICYCQSDFDFVHEMIQQLEQTDHKLKLCVFDRDALPGSCVWTITSELIEKRCKRMVVVISDEYLDSDACDFQTKFALSLCPGARSKRLIPVKYKSMKKPFPSILRFLTVCDYPRPCTQSWFWVRLAKALSLP.

A Death domain is found at 22 to 99 (RLGLFLNPRN…DVVEDLRVLI (78 aa)). The segment at 100 to 141 (EEDCKRYIERQNEPPVQVPEVDSCVPRTPERQGITLEDDPEG) is intermediate domain. The segment at 117–138 (VPEVDSCVPRTPERQGITLEDD) is disordered. In terms of domain architecture, TIR spans 145 to 279 (ELFDAFICYC…WFWVRLAKAL (135 aa)).

Its subcellular location is the cytoplasm. Functionally, adapter protein involved in the Toll-like receptor and IL-1 receptor signaling pathway in the innate immune response. The protein is Myeloid differentiation primary response protein MyD88 (myd88) of Oncorhynchus mykiss (Rainbow trout).